The following is a 185-amino-acid chain: Elongation factor P (185 aa).

This sequence belongs to the elongation factor P family.

The protein resides in the cytoplasm. The protein operates within protein biosynthesis; polypeptide chain elongation. In terms of biological role, involved in peptide bond synthesis. Stimulates efficient translation and peptide-bond synthesis on native or reconstituted 70S ribosomes in vitro. Probably functions indirectly by altering the affinity of the ribosome for aminoacyl-tRNA, thus increasing their reactivity as acceptors for peptidyl transferase. This Clostridium botulinum (strain Alaska E43 / Type E3) protein is Elongation factor P.